Consider the following 40-residue polypeptide: Dolichyl-diphosphooligosaccharide--protein glycosyltransferase subunit 4 (40 aa).

Residues 1–4 (MITD) are Lumenal-facing. Residues 5 to 25 (VQLAIFSNVLGVFLFLLVVAY) traverse the membrane as a helical segment. The Cytoplasmic portion of the chain corresponds to 26-40 (HYINANTGKIGPKAK).

Belongs to the OST4 family. Component of the oligosaccharyltransferase (OST) complex.

The protein resides in the endoplasmic reticulum membrane. Subunit of the oligosaccharyl transferase (OST) complex that catalyzes the initial transfer of a defined glycan (Glc(3)Man(9)GlcNAc(2) in eukaryotes) from the lipid carrier dolichol-pyrophosphate to an asparagine residue within an Asn-X-Ser/Thr consensus motif in nascent polypeptide chains, the first step in protein N-glycosylation. N-glycosylation occurs cotranslationally and the complex associates with the Sec61 complex at the channel-forming translocon complex that mediates protein translocation across the endoplasmic reticulum (ER). All subunits are required for a maximal enzyme activity. The polypeptide is Dolichyl-diphosphooligosaccharide--protein glycosyltransferase subunit 4 (Drosophila willistoni (Fruit fly)).